The chain runs to 207 residues: Urease accessory protein UreE (207 aa).

Positions 170 to 194 are enriched in basic and acidic residues; it reads EHHGHSHSHSHDHDHDHDHDHDHQH. The tract at residues 170–207 is disordered; the sequence is EHHGHSHSHSHDHDHDHDHDHDHQHGPCCSHGHHHGHR.

The protein belongs to the UreE family.

The protein localises to the cytoplasm. Functionally, involved in urease metallocenter assembly. Binds nickel. Probably functions as a nickel donor during metallocenter assembly. The polypeptide is Urease accessory protein UreE (Burkholderia pseudomallei (strain 1106a)).